Consider the following 259-residue polypeptide: MWFLILFLALSLGGIDAAPPGQSRIVGGYKCEKNSQPWQVAIINEYLCGGVLIDPSWVITAAHCYSNYYHVLLGRNNLFEDEPFAQYRFVNQSFPHPDYKPFLMRNHTRQRGDDYSNDLMLLHLSEPADITDGVKVIDLPTEEPKVGSTCLASGWGSTKPLNWELPDDLQCVNIHLLSNEKCIEAYEQKVTDLMLCAGEMDGRKDTCKGDSGGPLICDGVLQGITSWGNVPCAEPYNPGVYTKLIKFTSWIKEVMKENP.

Positions 1 to 18 (MWFLILFLALSLGGIDAA) are cleaved as a signal peptide. The propeptide at 19 to 24 (PPGQSR) is activation peptide. In terms of domain architecture, Peptidase S1 spans 25 to 256 (IVGGYKCEKN…FTSWIKEVMK (232 aa)). 5 disulfide bridges follow: cysteine 31–cysteine 171, cysteine 48–cysteine 64, cysteine 150–cysteine 217, cysteine 182–cysteine 196, and cysteine 207–cysteine 232. Histidine 63 acts as the Charge relay system in catalysis. Residues asparagine 91 and asparagine 106 are each glycosylated (N-linked (GlcNAc...) asparagine). Aspartate 118 (charge relay system) is an active-site residue. Serine 211 (charge relay system) is an active-site residue.

The protein belongs to the peptidase S1 family. Kallikrein subfamily. As to quaternary structure, heterodimer of a light chain and heavy chain linked by a disulfide bond. In terms of processing, probably N- and O-glycosylated. Kidney and submandibular gland, where it is found in the granular convoluted tubule and striated duct cells. It is likely that the enzyme is mainly synthesized in the granular convoluted tubules and then transferred to other tissues by release into the vasculature or interstitial space.

The catalysed reaction is Preferential cleavage of Arg-|-Xaa bonds in small molecule substrates. Highly selective action to release kallidin (lysyl-bradykinin) from kininogen involves hydrolysis of Met-|-Xaa or Leu-|-Xaa.. Its function is as follows. Glandular kallikreins cleave Met-Lys and Arg-Ser bonds in kininogen to release Lys-bradykinin. This protein may be involved in the regulation of renal function. The polypeptide is Glandular kallikrein-10 (Klk10) (Rattus norvegicus (Rat)).